The sequence spans 304 residues: Coenzyme PQQ synthesis protein B (304 aa).

It belongs to the PqqB family.

It participates in cofactor biosynthesis; pyrroloquinoline quinone biosynthesis. Its function is as follows. May be involved in the transport of PQQ or its precursor to the periplasm. The protein is Coenzyme PQQ synthesis protein B of Pseudomonas aeruginosa (strain UCBPP-PA14).